The following is a 343-amino-acid chain: Cytoplasmic tRNA 2-thiolation protein 1 (343 aa).

It belongs to the TtcA family. CTU1/NCS6/ATPBD3 subfamily.

The protein localises to the cytoplasm. The protein operates within tRNA modification; 5-methoxycarbonylmethyl-2-thiouridine-tRNA biosynthesis. In terms of biological role, plays a central role in 2-thiolation of mcm(5)S(2)U at tRNA wobble positions of tRNA(Lys), tRNA(Glu) and tRNA(Gln). Directly binds tRNAs and probably acts by catalyzing adenylation of tRNAs, an intermediate required for 2-thiolation. It is unclear whether it acts as a sulfurtransferase that transfers sulfur from thiocarboxylated URM1 onto the uridine of tRNAs at wobble position. This Drosophila erecta (Fruit fly) protein is Cytoplasmic tRNA 2-thiolation protein 1.